A 337-amino-acid polypeptide reads, in one-letter code: tRNA N6-adenosine threonylcarbamoyltransferase (337 aa).

Residues His111 and His115 each contribute to the Fe cation site. Substrate contacts are provided by residues 134–138 (LVSGG), Asp167, Gly180, and Asn272. Fe cation is bound at residue Asp300.

This sequence belongs to the KAE1 / TsaD family. Fe(2+) is required as a cofactor.

It is found in the cytoplasm. The catalysed reaction is L-threonylcarbamoyladenylate + adenosine(37) in tRNA = N(6)-L-threonylcarbamoyladenosine(37) in tRNA + AMP + H(+). In terms of biological role, required for the formation of a threonylcarbamoyl group on adenosine at position 37 (t(6)A37) in tRNAs that read codons beginning with adenine. Is involved in the transfer of the threonylcarbamoyl moiety of threonylcarbamoyl-AMP (TC-AMP) to the N6 group of A37, together with TsaE and TsaB. TsaD likely plays a direct catalytic role in this reaction. The chain is tRNA N6-adenosine threonylcarbamoyltransferase from Methylococcus capsulatus (strain ATCC 33009 / NCIMB 11132 / Bath).